Here is a 216-residue protein sequence, read N- to C-terminus: N-glycosylase/DNA lyase (216 aa).

3 residues coordinate 8-oxoguanine: Q27, S48, and W59. The segment at E106–P170 is helix-hairpin-helix. Residue K130 is the Schiff-base intermediate with DNA of the active site. Residues F134 and P160 each coordinate 8-oxoguanine. D162 is an active-site residue. 2 residues coordinate 8-oxoguanine: D190 and W194.

The protein belongs to the archaeal N-glycosylase/DNA lyase (AGOG) family.

It carries out the reaction 2'-deoxyribonucleotide-(2'-deoxyribose 5'-phosphate)-2'-deoxyribonucleotide-DNA = a 3'-end 2'-deoxyribonucleotide-(2,3-dehydro-2,3-deoxyribose 5'-phosphate)-DNA + a 5'-end 5'-phospho-2'-deoxyribonucleoside-DNA + H(+). Its function is as follows. DNA repair enzyme that is part of the base excision repair (BER) pathway; protects from oxidative damage by removing the major product of DNA oxidation, 8-oxoguanine (GO), from single- and double-stranded DNA substrates. The polypeptide is N-glycosylase/DNA lyase (Nanoarchaeum equitans (strain Kin4-M)).